The chain runs to 311 residues: tRNA-cytidine(32) 2-sulfurtransferase (311 aa).

The PP-loop motif motif lies at 47 to 52; it reads SGGKDS. [4Fe-4S] cluster is bound by residues Cys122, Cys125, and Cys213.

The protein belongs to the TtcA family. As to quaternary structure, homodimer. Requires Mg(2+) as cofactor. The cofactor is [4Fe-4S] cluster.

Its subcellular location is the cytoplasm. It carries out the reaction cytidine(32) in tRNA + S-sulfanyl-L-cysteinyl-[cysteine desulfurase] + AH2 + ATP = 2-thiocytidine(32) in tRNA + L-cysteinyl-[cysteine desulfurase] + A + AMP + diphosphate + H(+). Its pathway is tRNA modification. In terms of biological role, catalyzes the ATP-dependent 2-thiolation of cytidine in position 32 of tRNA, to form 2-thiocytidine (s(2)C32). The sulfur atoms are provided by the cysteine/cysteine desulfurase (IscS) system. This chain is tRNA-cytidine(32) 2-sulfurtransferase, found in Salmonella heidelberg (strain SL476).